Here is a 253-residue protein sequence, read N- to C-terminus: Small ribosomal subunit protein cS22 (253 aa).

A chloroplast-targeting transit peptide spans 1 to 56 (MATFLTNVVSIKPTIFSFQSESFTPLHTRVNVFSSKPFPSLAGTFSRSSRTRFIPY). RRM domains are found at residues 76-154 (RRVY…ITEK) and 177-253 (YKVY…VNKA).

This sequence belongs to the chloroplast-specific ribosomal protein cS22 family. In terms of assembly, component of the chloroplast small ribosomal subunit (SSU). Mature 70S chloroplast ribosomes of higher plants consist of a small (30S) and a large (50S) subunit. The 30S small subunit contains 1 molecule of ribosomal RNA (16S rRNA) and 24 different proteins. The 50S large subunit contains 3 rRNA molecules (23S, 5S and 4.5S rRNA) and 33 different proteins. In terms of tissue distribution, expressed constitutively in roots, stems, flower buds, flowers and leaves.

The protein resides in the plastid. The protein localises to the chloroplast. In terms of biological role, component of the chloroplast ribosome (chloro-ribosome), a dedicated translation machinery responsible for the synthesis of chloroplast genome-encoded proteins, including proteins of the transcription and translation machinery and components of the photosynthetic apparatus. May have a role in the recruitment of stored chloroplast mRNAs for active protein synthesis. Bind single strand DNA (ssDNA) and RNA in vitro. Exhibits RNA chaperone activity. Negatively regulates resistance responses to abiotic stresses during seed germination (e.g. salt, dehydration, and low temperature) and seedling growth (e.g. salt). This chain is Small ribosomal subunit protein cS22, found in Arabidopsis thaliana (Mouse-ear cress).